The sequence spans 340 residues: ATP-dependent 6-phosphofructokinase (340 aa).

Glycine 11 serves as a coordination point for ATP. Residue 21–25 coordinates ADP; that stretch reads RAVVR. ATP is bound by residues 72–73 and 102–105; these read RY and GDGS. Aspartate 103 contributes to the Mg(2+) binding site. 125 to 127 lines the substrate pocket; the sequence is TID. The active-site Proton acceptor is the aspartate 127. Arginine 154 contributes to the ADP binding site. Substrate-binding positions include arginine 162 and 169 to 171; that span reads MGR. Residues 185–187 and 213–215 each bind ADP; these read GAD and KHH. Substrate contacts are provided by residues glutamate 222, arginine 244, and 250-253; that span reads HLLR.

It belongs to the phosphofructokinase type A (PFKA) family. ATP-dependent PFK group I subfamily. Prokaryotic clade 'B1' sub-subfamily. In terms of assembly, homotetramer. Mg(2+) is required as a cofactor.

It is found in the cytoplasm. The catalysed reaction is beta-D-fructose 6-phosphate + ATP = beta-D-fructose 1,6-bisphosphate + ADP + H(+). It functions in the pathway carbohydrate degradation; glycolysis; D-glyceraldehyde 3-phosphate and glycerone phosphate from D-glucose: step 3/4. With respect to regulation, allosterically activated by ADP and other diphosphonucleosides, and allosterically inhibited by phosphoenolpyruvate. In terms of biological role, catalyzes the phosphorylation of D-fructose 6-phosphate to fructose 1,6-bisphosphate by ATP, the first committing step of glycolysis. The protein is ATP-dependent 6-phosphofructokinase of Streptococcus agalactiae serotype Ia (strain ATCC 27591 / A909 / CDC SS700).